The following is a 418-amino-acid chain: Deubiquitinase and deneddylase Dub1 (418 aa).

A compositionally biased stretch (polar residues) spans 1 to 11 (MLSPTNSTSKT). Residues 1-23 (MLSPTNSTSKTAPVPPQDSSKPV) form a disordered region. The chain crosses the membrane as a helical span at residues 40-60 (TALVVLLVVVTLGLILLFYSF). The tract at residues 72–145 (TRPSTKEQPT…LPPKAPKPVK (74 aa)) is disordered. A compositionally biased stretch (pro residues) spans 86–141 (VPLPSPPLAVPRPSTPPPPVISRPSMPPAPTPAISPPSTPSAPKPSTPPPLPPKAP). Active-site residues include H288, D305, and C358.

The protein belongs to the peptidase C48 family.

The protein resides in the secreted. It localises to the host cell. It is found in the membrane. In terms of biological role, effector proteins function to alter host cell physiology and promote bacterial survival in host tissues. This protease possesses deubiquitinating and deneddylating activities. This is Deubiquitinase and deneddylase Dub1 (cdu1) from Chlamydia trachomatis serovar E (strain Sweden2).